A 289-amino-acid chain; its full sequence is 4-hydroxy-3-methylbut-2-enyl diphosphate reductase (289 aa).

Cys-13 is a binding site for [4Fe-4S] cluster. (2E)-4-hydroxy-3-methylbut-2-enyl diphosphate contacts are provided by His-42 and His-74. Positions 42 and 74 each coordinate dimethylallyl diphosphate. His-42 and His-74 together coordinate isopentenyl diphosphate. Cys-96 is a binding site for [4Fe-4S] cluster. His-124 contributes to the (2E)-4-hydroxy-3-methylbut-2-enyl diphosphate binding site. His-124 contributes to the dimethylallyl diphosphate binding site. His-124 provides a ligand contact to isopentenyl diphosphate. Glu-126 functions as the Proton donor in the catalytic mechanism. Thr-165 is a binding site for (2E)-4-hydroxy-3-methylbut-2-enyl diphosphate. Cys-193 is a [4Fe-4S] cluster binding site. The (2E)-4-hydroxy-3-methylbut-2-enyl diphosphate site is built by Ser-221, Asn-223, and Ser-265. The dimethylallyl diphosphate site is built by Ser-221, Asn-223, and Ser-265. Isopentenyl diphosphate is bound by residues Ser-221, Asn-223, and Ser-265.

The protein belongs to the IspH family. Requires [4Fe-4S] cluster as cofactor.

It catalyses the reaction isopentenyl diphosphate + 2 oxidized [2Fe-2S]-[ferredoxin] + H2O = (2E)-4-hydroxy-3-methylbut-2-enyl diphosphate + 2 reduced [2Fe-2S]-[ferredoxin] + 2 H(+). The catalysed reaction is dimethylallyl diphosphate + 2 oxidized [2Fe-2S]-[ferredoxin] + H2O = (2E)-4-hydroxy-3-methylbut-2-enyl diphosphate + 2 reduced [2Fe-2S]-[ferredoxin] + 2 H(+). The protein operates within isoprenoid biosynthesis; dimethylallyl diphosphate biosynthesis; dimethylallyl diphosphate from (2E)-4-hydroxy-3-methylbutenyl diphosphate: step 1/1. It functions in the pathway isoprenoid biosynthesis; isopentenyl diphosphate biosynthesis via DXP pathway; isopentenyl diphosphate from 1-deoxy-D-xylulose 5-phosphate: step 6/6. With respect to regulation, highly sensitive to dioxygen. Its function is as follows. Catalyzes the conversion of 1-hydroxy-2-methyl-2-(E)-butenyl 4-diphosphate (HMBPP) into a mixture of isopentenyl diphosphate (IPP) and dimethylallyl diphosphate (DMAPP). Acts in the terminal step of the DOXP/MEP pathway for isoprenoid precursor biosynthesis. This is 4-hydroxy-3-methylbut-2-enyl diphosphate reductase from Aquifex aeolicus (strain VF5).